We begin with the raw amino-acid sequence, 82 residues long: Beta-neurotoxin Css9 (82 aa).

Positions 1–17 are cleaved as a signal peptide; that stretch reads MKLLMLIVALMIIGVQS. The LCN-type CS-alpha/beta domain maps to 18–81; sequence KDGYPMDHKG…VWDRATNKCR (64 aa). 4 disulfide bridges follow: Cys28/Cys80, Cys32/Cys54, Cys39/Cys61, and Cys43/Cys63.

Belongs to the long (4 C-C) scorpion toxin superfamily. Sodium channel inhibitor family. Beta subfamily. Expressed by the venom gland.

Its subcellular location is the secreted. Beta toxins bind voltage-independently at site-4 of sodium channels (Nav) and shift the voltage of activation toward more negative potentials thereby affecting sodium channel activation and promoting spontaneous and repetitive firing. This toxin compete with high affinity with 125I-Css4 bound on rat brain synaptosome and may bind with high affinity to Nav1.1/SCN1A, Nav1.2/SCN2A and Nav1.6/SCN8A. The protein is Beta-neurotoxin Css9 of Centruroides suffusus (Durango bark scorpion).